The chain runs to 394 residues: MGRLQMLKHKNEPLTPGYHGFPTRDSQGNQEPTTTPDAMVQPFTTIPFPPPPQNGIPTEYGVPHTQDYAGQTSEHNLTLYGSTQAHGEQSSNSPSTQNGSLTTEGGAQTDGQQSQTQSSENSESKSTPKRLHVSNIPFRFRDPDLRQMFGQFGKILDVEIIFNERGSKGFGFVTFENSADADRAREKLHGTVVEGRKIEVNNATARVMTNKKMVTPYANGWKLSPVVGAVYGPELYAASSFQADVSLGNDAAVPLSGRGGINTYIPLIIPGFPYPTAATTAAAFRGAHLRGRGRTVYGAVRAVPPAAIPAYPGVVYQDGFYGADLYGGYAAYRYAQPATATAATAAAAAAAAYSDGYGRVYTADPYHALAPAASYGVGAVASLYRGGYSRFAPY.

Disordered regions lie at residues 1-70 (MGRL…DYAG) and 83-135 (TQAH…HVSN). 2 stretches are compositionally biased toward polar residues: residues 24–36 (RDSQGNQEPTTTP) and 83–103 (TQAHGEQSSNSPSTQNGSLTT). Low complexity predominate over residues 105–125 (GGAQTDGQQSQTQSSENSESK). Residues 129–205 (KRLHVSNIPF…RKIEVNNATA (77 aa)) form the RRM domain. Omega-N-methylarginine is present on R285. R301 and R333 each carry asymmetric dimethylarginine. Asymmetric dimethylarginine; alternate occurs at positions 385 and 390. Residues R385 and R390 each carry the omega-N-methylarginine; alternate modification.

As to quaternary structure, interacts with ER-alpha N-terminal activation domain. Interacts with RBPMS; the interaction allows cooperative assembly of stable cell-specific alternative splicing regulatory complexes.

It is found in the nucleus. It localises to the cytoplasm. Its function is as follows. RNA-binding protein that regulates alternative splicing events by binding to 5'-UGCAUGU-3' elements. Prevents binding of U2AF2 to the 3'-splice site. Regulates alternative splicing of tissue-specific exons and of differentially spliced exons during erythropoiesis. Seems to act as a coregulatory factor of ER-alpha. Together with RNA binding proteins RBPMS and MBNL1/2, activates vascular smooth muscle cells alternative splicing events. This chain is RNA binding protein fox-1 homolog 2 (RBFOX2), found in Bos taurus (Bovine).